Reading from the N-terminus, the 429-residue chain is MATLSFVFLLLGAVSWPPASASGQEFWPGQSAADILSGAASRRRYLLYDVNPPEGFNLRRDVYIRIASLLKTLLKTEEWVLVLPPWGRLYHWQSPDIHQVRIPWSEFFDLPSLNKNIPVIEYEQFIAESGGPFIDQVYVLQSYAEGWKEGTWEEKVDERPCIDQLLYSQDKHEYYRGWFWGYEETRGLNVSCLSVQGSASIVAPLLLRNTSARSVMLDRAENLLHDHYGGKEYWDTRRSMVFARHLREVGDEFRSRHLNSTDDADRIPFQEDWMKMKVKLGSALGGPYLGVHLRRKDFIWGHRQDVPSLEGAVRKIRSLMKTHRLDKVFVATDAVRKEYEELKKLLPEMVRFEPTWEELELYKDGGVAIIDQWICAHARFFIGTSVSTFSFRIHEEREILGLDPKTTYNRFCGDQEKACEQPTHWKITY.

Residues 1-21 (MATLSFVFLLLGAVSWPPASA) form the signal peptide. Position 53–57 (53–57 (PEGFN)) interacts with GDP-beta-L-fucose. E54 acts as the Proton acceptor in catalysis. The cysteines at positions 161 and 192 are disulfide-linked. Residues N189, N209, and N259 are each glycosylated (N-linked (GlcNAc...) asparagine). GDP-beta-L-fucose is bound by residues 292 to 294 (HLR), D371, and 388 to 389 (TF). C412 and C419 are disulfide-bonded.

The protein belongs to the glycosyltransferase 68 family. In terms of tissue distribution, isoform A is expressed in fetal liver and peripheral blood lymphocytes. Isoform B is expressed in spleen, lung, testis, bone marrow, thymus, pancreas, prostate, fetal brain, fetal liver and fetal kidney. Isoform C is expressed in brain, heart, spleen, liver, lung, stomach, testis, placenta, skin, thymus, pancreas, mammary gland, prostate, fetal brain, fetal liver and fetal heart.

Its subcellular location is the endoplasmic reticulum. The protein resides in the golgi apparatus. It catalyses the reaction L-seryl-[protein] + GDP-beta-L-fucose = 3-O-(alpha-L-fucosyl)-L-seryl-[protein] + GDP + H(+). It carries out the reaction L-threonyl-[protein] + GDP-beta-L-fucose = 3-O-(alpha-L-fucosyl)-L-threonyl-[protein] + GDP + H(+). It participates in protein modification; protein glycosylation. With respect to regulation, inhibited by EDTA and by Zn(2+). Functionally, catalyzes the reaction that attaches fucose through an O-glycosidic linkage to a conserved serine or threonine residue in the consensus sequence C1-X-X-S/T-C2 of thrombospondin type I repeats (TSRs) where C1 and C2 are the first and second cysteines of the repeat, respectively. O-fucosylates members of several protein families including the ADAMTS, the thrombospondin (TSP) and spondin families. Required for the proper secretion of ADAMTS family members such as ADAMTSL1 and ADAMTS13. The O-fucosylation of TSRs is also required for restricting epithelial to mesenchymal transition (EMT), maintaining the correct patterning of mesoderm and localization of the definite endoderm. The chain is GDP-fucose protein O-fucosyltransferase 2 (POFUT2) from Homo sapiens (Human).